The following is a 498-amino-acid chain: ATP synthase subunit beta, chloroplastic (498 aa).

An ATP-binding site is contributed by 172–179; the sequence is GGAGVGKT.

Belongs to the ATPase alpha/beta chains family. In terms of assembly, F-type ATPases have 2 components, CF(1) - the catalytic core - and CF(0) - the membrane proton channel. CF(1) has five subunits: alpha(3), beta(3), gamma(1), delta(1), epsilon(1). CF(0) has four main subunits: a(1), b(1), b'(1) and c(9-12).

It is found in the plastid. The protein resides in the chloroplast thylakoid membrane. It carries out the reaction ATP + H2O + 4 H(+)(in) = ADP + phosphate + 5 H(+)(out). Produces ATP from ADP in the presence of a proton gradient across the membrane. The catalytic sites are hosted primarily by the beta subunits. In Drimys granadensis, this protein is ATP synthase subunit beta, chloroplastic.